Consider the following 46-residue polypeptide: Cysteine-rich venom protein asurin-1 (46 aa).

This sequence belongs to the CRISP family. Contains 8 disulfide bonds. Expressed by the venom gland.

The protein localises to the secreted. In terms of biological role, blocks contraction of smooth muscle elicited by high potassium-induced depolarization, but does not block caffeine-stimulated contraction. May target voltage-gated calcium channels on smooth muscle. The protein is Cysteine-rich venom protein asurin-1 of Austrelaps superbus (Lowland copperhead snake).